The chain runs to 31 residues: Protamine-YI (31 aa).

The segment at 1–31 (ARRRRSSSRPIRRRRPRRRTTRRRRAGRRRR) is disordered.

Testis.

The protein resides in the nucleus. The protein localises to the chromosome. Protamines substitute for histones in the chromatin of sperm during the haploid phase of spermatogenesis. They compact sperm DNA into a highly condensed, stable and inactive complex. This is Protamine-YI from Clupea harengus (Atlantic herring).